Consider the following 240-residue polypeptide: Large ribosomal subunit protein bL25 (240 aa).

Disordered stretches follow at residues 1–21 (MAENVLSAQKRTEQGKGPARR) and 204–240 (GAAPAAGAAAPAGGAAPAAGAAPAKGGEAKGGDKAKK). A compositionally biased stretch (low complexity) spans 204 to 229 (GAAPAAGAAAPAGGAAPAAGAAPAKG). A compositionally biased stretch (basic and acidic residues) spans 230–240 (GEAKGGDKAKK).

The protein belongs to the bacterial ribosomal protein bL25 family. CTC subfamily. Part of the 50S ribosomal subunit; part of the 5S rRNA/L5/L18/L25 subcomplex. Contacts the 5S rRNA. Binds to the 5S rRNA independently of L5 and L18.

This is one of the proteins that binds to the 5S RNA in the ribosome where it forms part of the central protuberance. In Anaeromyxobacter dehalogenans (strain 2CP-1 / ATCC BAA-258), this protein is Large ribosomal subunit protein bL25.